The primary structure comprises 436 residues: Phosphomethylpyrimidine synthase (436 aa).

Residues N69, M98, Y127, H163, 185-187, 226-229, and E265 each bind substrate; these read SRG and DACR. H269 provides a ligand contact to Zn(2+). Substrate is bound at residue Y292. A Zn(2+)-binding site is contributed by H333. 3 residues coordinate [4Fe-4S] cluster: C409, C412, and C416.

Belongs to the ThiC family. Requires [4Fe-4S] cluster as cofactor.

The enzyme catalyses 5-amino-1-(5-phospho-beta-D-ribosyl)imidazole + S-adenosyl-L-methionine = 4-amino-2-methyl-5-(phosphooxymethyl)pyrimidine + CO + 5'-deoxyadenosine + formate + L-methionine + 3 H(+). It participates in cofactor biosynthesis; thiamine diphosphate biosynthesis. Catalyzes the synthesis of the hydroxymethylpyrimidine phosphate (HMP-P) moiety of thiamine from aminoimidazole ribotide (AIR) in a radical S-adenosyl-L-methionine (SAM)-dependent reaction. This chain is Phosphomethylpyrimidine synthase, found in Clostridium perfringens (strain ATCC 13124 / DSM 756 / JCM 1290 / NCIMB 6125 / NCTC 8237 / Type A).